We begin with the raw amino-acid sequence, 210 residues long: MKKEIASHLLEIGAVFLQPNDPFTWSSGMKSPIYCDNRLTLSYPKVRQAIAAGLEELIKEHFPTVEVIAGTATAGIAHAAWVSDRMNLPMCYVRSKAKGHGKGNQIEGKAEKGQKVVVVEDLISTGGSAITCVEALREAGCEVLGIVSIFTYELEAGKEKLAAANVASYSLSDYSTLTQVAEEKGMIGQAEMKKLQEWRKNPADEAWITA.

5-phospho-alpha-D-ribose 1-diphosphate contacts are provided by residues arginine 94, lysine 98, histidine 100, and glutamate 120–serine 128. Serine 124 provides a ligand contact to orotate.

Belongs to the purine/pyrimidine phosphoribosyltransferase family. PyrE subfamily. As to quaternary structure, homodimer. The cofactor is Mg(2+).

It catalyses the reaction orotidine 5'-phosphate + diphosphate = orotate + 5-phospho-alpha-D-ribose 1-diphosphate. Its pathway is pyrimidine metabolism; UMP biosynthesis via de novo pathway; UMP from orotate: step 1/2. Its function is as follows. Catalyzes the transfer of a ribosyl phosphate group from 5-phosphoribose 1-diphosphate to orotate, leading to the formation of orotidine monophosphate (OMP). The sequence is that of Orotate phosphoribosyltransferase from Bacillus cytotoxicus (strain DSM 22905 / CIP 110041 / 391-98 / NVH 391-98).